Reading from the N-terminus, the 221-residue chain is Eukaryotic translation initiation factor 3 subunit K (221 aa).

Residues tyrosine 46–proline 215 enclose the PCI domain.

It belongs to the eIF-3 subunit K family. In terms of assembly, component of the eukaryotic translation initiation factor 3 (eIF-3) complex.

It is found in the cytoplasm. Functionally, component of the eukaryotic translation initiation factor 3 (eIF-3) complex, which is involved in protein synthesis of a specialized repertoire of mRNAs and, together with other initiation factors, stimulates binding of mRNA and methionyl-tRNAi to the 40S ribosome. The eIF-3 complex specifically targets and initiates translation of a subset of mRNAs involved in cell proliferation. The protein is Eukaryotic translation initiation factor 3 subunit K of Anopheles gambiae (African malaria mosquito).